We begin with the raw amino-acid sequence, 877 residues long: DNA polymerase I (877 aa).

Residues 180–270 form the 5'-3' exonuclease domain; sequence TPAQFIDLKA…EIGLDDTLLK (91 aa). A 3'-5' exonuclease domain is found at 308 to 468; the sequence is DEIDFEIVTD…AKEKMMAELL (161 aa).

The protein belongs to the DNA polymerase type-A family. In terms of assembly, single-chain monomer with multiple functions.

The enzyme catalyses DNA(n) + a 2'-deoxyribonucleoside 5'-triphosphate = DNA(n+1) + diphosphate. Functionally, in addition to polymerase activity, this DNA polymerase exhibits 3'-5' and 5'-3' exonuclease activity. This Lactococcus lactis subsp. lactis (strain IL1403) (Streptococcus lactis) protein is DNA polymerase I (polA).